The sequence spans 131 residues: SPbeta prophage-derived uncharacterized protein YomZ (131 aa).

The polypeptide is SPbeta prophage-derived uncharacterized protein YomZ (yomZ) (Bacillus subtilis (strain 168)).